A 100-amino-acid chain; its full sequence is Small ribosomal subunit protein bS6 (100 aa).

The protein belongs to the bacterial ribosomal protein bS6 family.

Binds together with bS18 to 16S ribosomal RNA. The protein is Small ribosomal subunit protein bS6 of Tropheryma whipplei (strain TW08/27) (Whipple's bacillus).